A 408-amino-acid polypeptide reads, in one-letter code: Multidrug resistance protein MdtG (408 aa).

10 helical membrane passes run 16–36, 58–78, 92–112, 115–135, 146–166, 173–193, 224–244, 256–276, 290–310, and 378–398; these read LIVA…VMPF, IVFS…GGLA, LGMG…QFLI, ALLG…ATQV, TLST…GLLA, PVFF…LFCI, LFVT…ILTL, VAFI…LSAP, ILIT…YVQT, and AVFL…WNSL.

Belongs to the major facilitator superfamily. DHA1 family. MdtG (TC 2.A.1.2.20) subfamily.

The protein localises to the cell inner membrane. Confers resistance to fosfomycin and deoxycholate. The polypeptide is Multidrug resistance protein MdtG (Escherichia coli O17:K52:H18 (strain UMN026 / ExPEC)).